We begin with the raw amino-acid sequence, 223 residues long: Pyridoxal phosphate homeostasis protein (223 aa).

At K36 the chain carries N6-(pyridoxal phosphate)lysine.

This sequence belongs to the pyridoxal phosphate-binding protein YggS/PROSC family. Monomer.

Pyridoxal 5'-phosphate (PLP)-binding protein, which is involved in PLP homeostasis. The chain is Pyridoxal phosphate homeostasis protein from Buchnera aphidicola subsp. Baizongia pistaciae (strain Bp).